The sequence spans 219 residues: ADP-sugar pyrophosphatase (219 aa).

Methionine 1 is subject to N-acetylmethionine. A phosphoserine mark is found at serine 3 and serine 10. Tryptophan 28 provides a ligand contact to substrate. Lysine 42 is covalently cross-linked (Glycyl lysine isopeptide (Lys-Gly) (interchain with G-Cter in SUMO2)). The residue at position 45 (threonine 45) is a Phosphothreonine. Residues 46 to 47 (WE) and arginine 51 contribute to the substrate site. The Nudix hydrolase domain maps to 57 to 197 (QTADGVAVIP…EEHLTVDARV (141 aa)). Position 74 is a phosphotyrosine (tyrosine 74). Arginine 84 contacts substrate. Position 96 (alanine 96) interacts with Mg(2+). A Nudix box motif is present at residues 97–118 (GLIDDGETPEAAALRELEEETG). Leucine 98 is a binding site for substrate. Mg(2+) contacts are provided by glutamate 112 and glutamate 116. Aspartate 133 is a binding site for substrate. Glutamate 166 is a Mg(2+) binding site. An N6-acetyllysine mark is found at lysine 210 and lysine 218.

The protein belongs to the Nudix hydrolase family. In terms of assembly, homodimer. Interacts with PARG. The cofactor is Mg(2+). In terms of processing, phosphorylation at Thr-45 is required for homodimer stability; dephosphorylation results in destabilization of the homodimer. Dephosphorylation at Thr-45 promotes the ATP-synthesis activity. As to expression, widely expressed. Most abundant in liver.

It localises to the nucleus. The catalysed reaction is D-ribose 5-phosphate + ATP + H(+) = ADP-D-ribose + diphosphate. The enzyme catalyses ADP-D-ribose + H2O = D-ribose 5-phosphate + AMP + 2 H(+). It carries out the reaction 8-oxo-dGDP + H2O = 8-oxo-dGMP + phosphate + H(+). Enzyme that can either act as an ADP-sugar pyrophosphatase in absence of diphosphate or catalyze the synthesis of ATP in presence of diphosphate. In absence of diphosphate, hydrolyzes with similar activities various modified nucleoside diphosphates such as ADP-ribose, ADP-mannose, ADP-glucose, 8-oxo-GDP and 8-oxo-dGDP. Can also hydrolyze other nucleotide sugars with low activity. In presence of diphosphate, mediates the synthesis of ATP in the nucleus by catalyzing the conversion of ADP-ribose to ATP and ribose 5-phosphate. Nuclear ATP synthesis takes place when dephosphorylated at Thr-45. Nuclear ATP generation is required for extensive chromatin remodeling events that are energy-consuming. Does not play a role in U8 snoRNA decapping activity. Binds U8 snoRNA. In Homo sapiens (Human), this protein is ADP-sugar pyrophosphatase (NUDT5).